The chain runs to 180 residues: Acireductone dioxygenase (180 aa).

Residues H97, H99, E103, and H141 each coordinate Fe(2+). Ni(2+) is bound by residues H97, H99, E103, and H141.

Belongs to the acireductone dioxygenase (ARD) family. Monomer. It depends on Fe(2+) as a cofactor. The cofactor is Ni(2+).

It carries out the reaction 1,2-dihydroxy-5-(methylsulfanyl)pent-1-en-3-one + O2 = 3-(methylsulfanyl)propanoate + CO + formate + 2 H(+). The catalysed reaction is 1,2-dihydroxy-5-(methylsulfanyl)pent-1-en-3-one + O2 = 4-methylsulfanyl-2-oxobutanoate + formate + 2 H(+). The protein operates within amino-acid biosynthesis; L-methionine biosynthesis via salvage pathway; L-methionine from S-methyl-5-thio-alpha-D-ribose 1-phosphate: step 5/6. Functionally, catalyzes 2 different reactions between oxygen and the acireductone 1,2-dihydroxy-3-keto-5-methylthiopentene (DHK-MTPene) depending upon the metal bound in the active site. Fe-containing acireductone dioxygenase (Fe-ARD) produces formate and 2-keto-4-methylthiobutyrate (KMTB), the alpha-ketoacid precursor of methionine in the methionine recycle pathway. Ni-containing acireductone dioxygenase (Ni-ARD) produces methylthiopropionate, carbon monoxide and formate, and does not lie on the methionine recycle pathway. This is Acireductone dioxygenase from Serratia proteamaculans (strain 568).